The primary structure comprises 392 residues: S-adenosylmethionine decarboxylase proenzyme (392 aa).

Residues Glu43 and Glu46 contribute to the active site. Ser100 serves as the catalytic Schiff-base intermediate with substrate; via pyruvic acid. Ser100 is subject to Pyruvic acid (Ser); by autocatalysis. Cys114 functions as the Proton donor; for catalytic activity in the catalytic mechanism. Active-site proton acceptor; for processing activity residues include Ser264 and His277.

Belongs to the eukaryotic AdoMetDC family. It depends on pyruvate as a cofactor. Post-translationally, is synthesized initially as an inactive proenzyme. Formation of the active enzyme involves a self-maturation process in which the active site pyruvoyl group is generated from an internal serine residue via an autocatalytic post-translational modification. Two non-identical subunits are generated from the proenzyme in this reaction, and the pyruvate is formed at the N-terminus of the alpha chain, which is derived from the carboxyl end of the proenzyme. The post-translation cleavage follows an unusual pathway, termed non-hydrolytic serinolysis, in which the side chain hydroxyl group of the serine supplies its oxygen atom to form the C-terminus of the beta chain, while the remainder of the serine residue undergoes an oxidative deamination to produce ammonia and the pyruvoyl group blocking the N-terminus of the alpha chain.

The catalysed reaction is S-adenosyl-L-methionine + H(+) = S-adenosyl 3-(methylsulfanyl)propylamine + CO2. It functions in the pathway amine and polyamine biosynthesis; S-adenosylmethioninamine biosynthesis; S-adenosylmethioninamine from S-adenosyl-L-methionine: step 1/1. The polypeptide is S-adenosylmethionine decarboxylase proenzyme (Leishmania infantum).